We begin with the raw amino-acid sequence, 503 residues long: Cytochrome P450 monooxygenase roqO (503 aa).

Residues 11 to 31 form a helical membrane-spanning segment; it reads YSGTACAISLFIFGITLLFPF. Asn-205 carries N-linked (GlcNAc...) asparagine glycosylation. Residue Cys-444 participates in heme binding.

It belongs to the cytochrome P450 family. Heme serves as cofactor.

The protein resides in the membrane. It functions in the pathway alkaloid biosynthesis. In terms of biological role, cytochrome P450 monooxygenase; part of the gene cluster that mediates the biosynthesis of the mycotoxin meleagrin. The first stage is catalyzed by the dipeptide synthase roqA which condenses histidine and tryptophan to produce histidyltryptophanyldiketopiperazine (HTD). HTD is then converted to roquefortine C through two possible pathways. In the first pathway, prenyltransferase roqD transforms HTD to the intermediate roquefortine D, which is in turn converted to roquefortine C by the cytochrome P450 monooxygenase roqR. In the second pathway, HTD is first converted to the intermediate dehydrohistidyltryptophanyldi-ketopiperazine (DHTD) by roqR which is then prenylated by roqD to form roquefortine C. Roquefortine C can be further transformed to meleagrin via three more reactions including oxydation to glandicolin A by roqM, which is further reduced to glandicoline B by roqO. Finally, glandicoline B is converted to meleagrin by the glandicoline B O-methyltransferase roqN. More studies identified further branching and additional metabolites produced by the roquefortine/meleagrin cluster, including roquefortine F, roquefortine L, roquefortine M, roquefortine N and neoxaline. The protein is Cytochrome P450 monooxygenase roqO of Penicillium rubens (strain ATCC 28089 / DSM 1075 / NRRL 1951 / Wisconsin 54-1255) (Penicillium chrysogenum).